A 491-amino-acid polypeptide reads, in one-letter code: (S)-canadine synthase (491 aa).

A helical membrane pass occupies residues Leu-6–Phe-26. Position 434 (Cys-434) interacts with heme.

This sequence belongs to the cytochrome P450 family. Requires heme as cofactor. Expressed at low levels in roots.

It localises to the endoplasmic reticulum membrane. Its subcellular location is the microsome membrane. The catalysed reaction is (S)-tetrahydrocolumbamine + reduced [NADPH--hemoprotein reductase] + O2 = (S)-canadine + oxidized [NADPH--hemoprotein reductase] + 2 H2O + H(+). Involved in the last but one step of the biosynthesis of berberine, an antimicrobial benzylisoquinoline alkaloid. Converts (S)-tetrahydrocolumbamine (THC) to (S)-tetrahydroberberine (THB) also called (S)-canadine. This chain is (S)-canadine synthase (CYP719A1), found in Coptis japonica (Japanese goldthread).